The sequence spans 63 residues: uncharacterized protein (63 aa).

This is an uncharacterized protein from Azospirillum brasilense.